We begin with the raw amino-acid sequence, 312 residues long: MTIQLKCLSHTPLRGINDPGAATVAEVDAVLAKAKAEVEAFDPELIVVFAPDHYNGLFYDLMPPFVIATAADSVGDYQTMTGPLSVDKDLALEMAKFILDSDIDIAISHRLQVDHGCTQTLEEMTGSLTRYPVIPIIINSVAPPFGPYRRVRKLGEAVGKFIAKLNKRVLILGTGGLSHEPPVPLLSGANEDIANFLIAGRNPTPEFRAARQARTLATGMIFGKPECELTPLNPEWDQNFMDLLIRGQLDKVDAFDIEEISKAAGRSTHEVRTWVAAFAAMAASGPYNAHQDYYRPINEWIAGYGVVSASQK.

H115 acts as the Proton donor in catalysis. H179 functions as the Proton acceptor in the catalytic mechanism.

The protein belongs to the LigB/MhpB extradiol dioxygenase family. In terms of assembly, homotetramer. Fe(2+) is required as a cofactor.

The enzyme catalyses 3-(2,3-dihydroxyphenyl)propanoate + O2 = (2Z,4E)-2-hydroxy-6-oxonona-2,4-dienedioate + H(+). The catalysed reaction is (2E)-3-(2,3-dihydroxyphenyl)prop-2-enoate + O2 = (2Z,4E,7E)-2-hydroxy-6-oxonona-2,4,7-trienedioate + H(+). It functions in the pathway aromatic compound metabolism; 3-phenylpropanoate degradation. Catalyzes the non-heme iron(II)-dependent oxidative cleavage of 2,3-dihydroxyphenylpropionic acid and 2,3-dihydroxicinnamic acid into 2-hydroxy-6-ketononadienedioate and 2-hydroxy-6-ketononatrienedioate, respectively. The polypeptide is 2,3-dihydroxyphenylpropionate/2,3-dihydroxicinnamic acid 1,2-dioxygenase 1 (Dechloromonas aromatica (strain RCB)).